The following is a 540-amino-acid chain: MKKIIVVGSTNVDKVLNVEKYALPGETLAINTYQQSHGGGKGANQAIAAARSGADTTFITKLGNDEDAKMMVKGFKADGMNIDDVITTTDQETGKAYITVDKSGQNSIYVYGGANMAMTPTDVDAHKSAIINADRVIAQLEIPVPAVIEAFKIAKEHGVQTILNPAPAKELPEELLKLTDIITPNESEAATLTGIEVKDETSMLANAKFFFERGIKMVIITVGGRGSFFATPDDHALIPPFPAKVVDTTAAGDTFIGSLASQLEIDLSNIRKAMLYASHASSLTIQVAGAQNSIPTREAILNVINQDQMTKTEIEKQKAQAAAYAAKLVPDHIVLGLGSGTTAAYFVKAINQRINDEHLDIQCVATSVGTEKLAEKLGMRMLDVNTIDQVDLTVDGADVVDHQLNGIKGGGAALLFEKLVADMSKQNIWIVDQSKYTDSLAGHILTIEVIPFGGMGVFRYLKENGYQPEFRFKDNGDILETDSGNYLINIIIPKDADLEKLSIDLKKQTGVVEHGLFLNVCDELIIGGDQIKTIKRSDLS.

Residues 1 to 308 (MKKIIVVGST…AILNVINQDQ (308 aa)) are ribokinase. Substrate contacts are provided by residues 11 to 13 (NVD), 39 to 44 (GGKGAN), and Glu-141. ATP-binding positions include Asn-185 and 221 to 226 (TVGGRG). Asp-247 and Thr-249 together coordinate K(+). Residue 252-253 (GD) participates in ATP binding. Asp-253 contacts substrate. The Proton acceptor; for ribokinase activity role is filled by Asp-253. The K(+) site is built by Thr-284, Val-287, Gly-289, and Ser-293. Residues 309–540 (MTKTEIEKQK…IKTIKRSDLS (232 aa)) are ribose-5-phosphate isomerase A. Substrate contacts are provided by residues 339–342 (SGTT), 395–398 (DGAD), and 408–411 (KGGG). The active-site Proton acceptor; for ribose-5-phosphate isomerase activity is the Glu-417. Lys-435 contacts substrate.

The protein in the N-terminal section; belongs to the carbohydrate kinase PfkB family. Ribokinase subfamily. It in the C-terminal section; belongs to the ribose 5-phosphate isomerase family. Mg(2+) serves as cofactor.

The protein localises to the cytoplasm. The catalysed reaction is D-ribose + ATP = D-ribose 5-phosphate + ADP + H(+). It carries out the reaction aldehydo-D-ribose 5-phosphate = D-ribulose 5-phosphate. Its pathway is carbohydrate metabolism; D-ribose degradation; D-ribose 5-phosphate from beta-D-ribopyranose: step 2/2. It participates in carbohydrate degradation; pentose phosphate pathway; D-ribose 5-phosphate from D-ribulose 5-phosphate (non-oxidative stage): step 1/1. Its activity is regulated as follows. Activated by a monovalent cation that binds near, but not in, the active site. The most likely occupant of the site in vivo is potassium. Also activated by ammonium ion. Ion binding induces a conformational change that may alter substrate affinity. Bifunctional enzyme that catalyzes the phosphorylation of ribose at O-5 in a reaction requiring ATP and magnesium, and the reversible conversion of ribose 5-phosphate to ribulose 5-phosphate. In Fructilactobacillus sanfranciscensis (strain ATCC 27651 / DSM 20451 / JCM 5668 / CCUG 30143 / KCTC 3205 / NCIMB 702811 / NRRL B-3934 / L-12) (Lactobacillus sanfranciscensis), this protein is Bifunctional ribokinase/ribose-5-phosphate isomerase A (rbsK/rbiA).